The primary structure comprises 218 residues: DNA-directed RNA polymerase III subunit RPC7-like (218 aa).

The disordered stretch occupies residues 130-218 (TIILPKRPPK…SDDNMDEAIY (89 aa)). Residues 139–160 (KTTEDKEETIQKLETLEKKEEE) are compositionally biased toward basic and acidic residues. Composition is skewed to acidic residues over residues 161-193 (VTSEEDEEKEEEEEKEEEEEEEYDEEEHEEETD) and 201-218 (NGEDFGGDSDDNMDEAIY).

Belongs to the eukaryotic RPC7 RNA polymerase subunit family. In terms of assembly, component of the RNA polymerase III (Pol III) complex consisting of 17 subunits. Pol III exists as two alternative complexes defined by the mutually exclusive incorporation of subunit POLR3G/RPC7alpha or POLR3GL/RPC7beta. Found in a trimeric complex with POLR3C/RPC3 and POLR3F/RPC6. Directly interacts with POLR3C.

Its subcellular location is the nucleus. Its function is as follows. DNA-dependent RNA polymerase catalyzes the transcription of DNA into RNA using the four ribonucleoside triphosphates as substrates. Specific peripheric component of RNA polymerase III which synthesizes small RNAs, such as 5S rRNA and tRNAs. This is DNA-directed RNA polymerase III subunit RPC7-like (POLR3GL) from Bos taurus (Bovine).